The primary structure comprises 513 residues: Sterol 14-alpha demethylase rstn2 (513 aa).

Residues 3–23 (WPLIGAYALLAFVAIIALNVT) traverse the membrane as a helical segment. Cys453 lines the heme pocket.

Belongs to the cytochrome P450 family. Heme serves as cofactor.

It is found in the membrane. The enzyme catalyses a 14alpha-methyl steroid + 3 reduced [NADPH--hemoprotein reductase] + 3 O2 = a Delta(14) steroid + formate + 3 oxidized [NADPH--hemoprotein reductase] + 4 H2O + 4 H(+). It carries out the reaction a 14alpha-methyl steroid + reduced [NADPH--hemoprotein reductase] + O2 = a 14alpha-hydroxymethyl steroid + oxidized [NADPH--hemoprotein reductase] + H2O + H(+). It catalyses the reaction a 14alpha-hydroxymethyl steroid + reduced [NADPH--hemoprotein reductase] + O2 = a 14alpha-formyl steroid + oxidized [NADPH--hemoprotein reductase] + 2 H2O + H(+). The catalysed reaction is a 14alpha-formyl steroid + reduced [NADPH--hemoprotein reductase] + O2 = a Delta(14) steroid + formate + oxidized [NADPH--hemoprotein reductase] + H2O + 2 H(+). The enzyme catalyses lanosterol + 3 reduced [NADPH--hemoprotein reductase] + 3 O2 = 4,4-dimethyl-5alpha-cholesta-8,14,24-trien-3beta-ol + formate + 3 oxidized [NADPH--hemoprotein reductase] + 4 H2O + 4 H(+). It carries out the reaction lanosterol + reduced [NADPH--hemoprotein reductase] + O2 = 32-hydroxylanosterol + oxidized [NADPH--hemoprotein reductase] + H2O + H(+). It catalyses the reaction 32-hydroxylanosterol + reduced [NADPH--hemoprotein reductase] + O2 = 32-oxolanosterol + oxidized [NADPH--hemoprotein reductase] + 2 H2O + H(+). The catalysed reaction is 32-oxolanosterol + reduced [NADPH--hemoprotein reductase] + O2 = 4,4-dimethyl-5alpha-cholesta-8,14,24-trien-3beta-ol + formate + oxidized [NADPH--hemoprotein reductase] + H2O + 2 H(+). The enzyme catalyses eburicol + 3 reduced [NADPH--hemoprotein reductase] + 3 O2 = 14-demethyleburicol + formate + 3 oxidized [NADPH--hemoprotein reductase] + 4 H2O + 4 H(+). It carries out the reaction eburicol + reduced [NADPH--hemoprotein reductase] + O2 = 32-hydroxyeburicol + oxidized [NADPH--hemoprotein reductase] + H2O + H(+). It catalyses the reaction 32-hydroxyeburicol + reduced [NADPH--hemoprotein reductase] + O2 = 32-oxoeburicol + oxidized [NADPH--hemoprotein reductase] + 2 H2O + H(+). The catalysed reaction is 32-oxoeburicol + reduced [NADPH--hemoprotein reductase] + O2 = 14-demethyleburicol + formate + oxidized [NADPH--hemoprotein reductase] + H2O + 2 H(+). Its pathway is steroid biosynthesis; sterol biosynthesis. Its function is as follows. Sterol 14-alpha demethylase; part of the gene cluster that mediates the biosynthesis of the tetrahydropyranyl antifungal agent restricticin that acts as an inhibitor of CYP51 and blocks the ergosterol biosynthesis. Sterol 14-alpha-demethylase plays a critical role in the biosynthesis of ergosterol, the major sterol component in fungal membranes that participates in a variety of functions. Rtsn2 acts as a self-resistant CYP51 that contains mutations found in CYP51s isolated from azole resistance strains and that is not inhibited by the final product of the cluster, restricticin. This is Sterol 14-alpha demethylase rstn2 from Aspergillus nomiae NRRL (strain ATCC 15546 / NRRL 13137 / CBS 260.88 / M93).